We begin with the raw amino-acid sequence, 403 residues long: FAD-dependent monooxygenase tazP (403 aa).

4 residues coordinate FAD: Gly75, Arg144, Asp354, and Ala367.

It belongs to the paxM FAD-dependent monooxygenase family. The cofactor is FAD.

The protein operates within secondary metabolite biosynthesis. Functionally, FAD-dependent monooxygenase; part of the gene cluster that mediates the biosynthesis of azaterrilone A and other azaphilones, a class of fungal metabolites characterized by a highly oxygenated pyrano-quinone bicyclic core and exhibiting a broad range of bioactivities. The first step of the pathway begins with the non-reducing polyketide synthase tazA that assembles one acetyl-CoA starter unit, five malonyl-CoA units, and catalyzes a series of Claisen condensations, methylation, PT-mediated cyclization, and finally releases the first hexaketide precursor through the R-domain. The tazA product then undergoes reduction on its terminal ketone and the following pyran-ring formation by yet undetermined enzyme(s). Dehydration and enoyl reduction, possibly involving the trans-enoyl reductase tazE leads to the next intermediate. TazD is predicted as an acetyltransferase and might catalyze the acetylation steps leading to the synthesis of azaterrilone A. Azaterrilone A is not the final product of the taz pathway and both the highly reducing polyketide synthase tazB and the dual enzyme tazHJ catalyze late steps of the pathway, leading to the production of the 2 final stereoisomers that contain additional polyketide modification whose structures have still to be determined. The sequence is that of FAD-dependent monooxygenase tazP from Aspergillus terreus (strain NIH 2624 / FGSC A1156).